The chain runs to 606 residues: 4-hydroxy-3-methylbut-2-en-1-yl diphosphate synthase (flavodoxin) (606 aa).

[4Fe-4S] cluster contacts are provided by Cys513, Cys516, Cys547, and Glu554.

The protein belongs to the IspG family. The cofactor is [4Fe-4S] cluster.

It catalyses the reaction (2E)-4-hydroxy-3-methylbut-2-enyl diphosphate + oxidized [flavodoxin] + H2O + 2 H(+) = 2-C-methyl-D-erythritol 2,4-cyclic diphosphate + reduced [flavodoxin]. Its pathway is isoprenoid biosynthesis; isopentenyl diphosphate biosynthesis via DXP pathway; isopentenyl diphosphate from 1-deoxy-D-xylulose 5-phosphate: step 5/6. In terms of biological role, converts 2C-methyl-D-erythritol 2,4-cyclodiphosphate (ME-2,4cPP) into 1-hydroxy-2-methyl-2-(E)-butenyl 4-diphosphate. The polypeptide is 4-hydroxy-3-methylbut-2-en-1-yl diphosphate synthase (flavodoxin) (Chlamydia felis (strain Fe/C-56) (Chlamydophila felis)).